Consider the following 366-residue polypeptide: Arfaptin-1 (366 aa).

A disordered region spans residues 1–78; that stretch reads MAEESPKNSA…SSAPPLPCVL (78 aa). N-acetylalanine is present on alanine 2. Serine 5 is subject to Phosphoserine. Residues 22-35 are compositionally biased toward basic and acidic residues; the sequence is GDAHEHGYNRDLKH. Residues serine 36 and serine 39 each carry the phosphoserine modification. The span at 44 to 53 shows a compositional bias: polar residues; the sequence is SETQITSHGF. Residues serine 69, serine 79, and serine 125 each carry the phosphoserine modification. The AH domain occupies 146 to 346; that stretch reads TVDLELEAQI…NQKQLEQTLK (201 aa). Residue threonine 354 is modified to Phosphothreonine.

Forms homodimers or heterodimers with ARFIP2. Interacts with non-myristoylated GTP-bound ARF3, but not to GDP-bound ARF3. Interacts with ARF1. Binds with lower affinity to ARF5 and with very little affinity to ARF6. Interacts with ARL1. Interacts with ATG9A.

It localises to the golgi apparatus. The protein localises to the trans-Golgi network membrane. Plays a role in controlling biogenesis of secretory granules at the trans-Golgi network. Mechanistically, binds ARF-GTP at the neck of a growing secretory granule precursor and forms a protective scaffold. Once the granule precursor has been completely loaded, active PRKD1 phosphorylates ARFIP1 and releases it from ARFs. In turn, ARFs induce fission. Through this mechanism, ensures proper secretory granule formation at the Golgi of pancreatic beta cells. The chain is Arfaptin-1 from Rattus norvegicus (Rat).